Here is a 536-residue protein sequence, read N- to C-terminus: Phosphoenolpyruvate carboxykinase (ATP) (536 aa).

Positions 61, 195, and 201 each coordinate substrate. ATP contacts are provided by residues lysine 201, histidine 220, and 236–244 (GLSGTGKTT). The Mn(2+) site is built by lysine 201 and histidine 220. Aspartate 257 is a Mn(2+) binding site. Positions 285, 322, and 447 each coordinate ATP. Residue arginine 322 participates in substrate binding.

It belongs to the phosphoenolpyruvate carboxykinase (ATP) family. It depends on Mn(2+) as a cofactor.

The protein resides in the cytoplasm. The catalysed reaction is oxaloacetate + ATP = phosphoenolpyruvate + ADP + CO2. Its pathway is carbohydrate biosynthesis; gluconeogenesis. Its function is as follows. Involved in the gluconeogenesis. Catalyzes the conversion of oxaloacetate (OAA) to phosphoenolpyruvate (PEP) through direct phosphoryl transfer between the nucleoside triphosphate and OAA. The protein is Phosphoenolpyruvate carboxykinase (ATP) of Rhizobium rhizogenes (strain K84 / ATCC BAA-868) (Agrobacterium radiobacter).